An 878-amino-acid polypeptide reads, in one-letter code: Probable receptor-like protein kinase At4g39110 (878 aa).

Residues 1–43 form the signal peptide; it reads MEIRKKPNIFTVLVIDFSSKPSMALLLAILLFLSGPSASAVAA. The Extracellular segment spans residues 44-440; sequence AAVGPATGFK…GRTTGMGKHG (397 aa). Asn170, Asn183, Asn254, Asn317, and Asn382 each carry an N-linked (GlcNAc...) asparagine glycan. A helical membrane pass occupies residues 441–461; sequence MVATAGFVMMFGAFIGLGAMV. Residues 462–878 are Cytoplasmic-facing; sequence YKWKKRPQDW…FTQFANLNGR (417 aa). The Protein kinase domain maps to 526–798; that stretch reads FEASQIIGVG…GDVLWNLEYA (273 aa). ATP is bound by residues 532 to 540 and Lys554; that span reads IGVGGFGNV. The active-site Proton acceptor is Asp650. A disordered region spans residues 808–844; it reads GKAEETENAKPDVVTPGSVPVSDPSPITPSVTTNEAA.

It belongs to the protein kinase superfamily. Ser/Thr protein kinase family.

The protein resides in the membrane. The sequence is that of Probable receptor-like protein kinase At4g39110 from Arabidopsis thaliana (Mouse-ear cress).